Here is a 303-residue protein sequence, read N- to C-terminus: Phosphate import ATP-binding protein PstB (303 aa).

Residues 56 to 298 (LSTSDVHVYY…PDHQLTEAYI (243 aa)) form the ABC transporter domain. 88–95 (GPSGCGKS) contacts ATP.

Belongs to the ABC transporter superfamily. Phosphate importer (TC 3.A.1.7) family. The complex is composed of two ATP-binding proteins (PstB), two transmembrane proteins (PstC and PstA) and a solute-binding protein (PstS).

It is found in the cell inner membrane. The enzyme catalyses phosphate(out) + ATP + H2O = ADP + 2 phosphate(in) + H(+). Its function is as follows. Part of the ABC transporter complex PstSACB involved in phosphate import. Responsible for energy coupling to the transport system. This is Phosphate import ATP-binding protein PstB from Acinetobacter baylyi (strain ATCC 33305 / BD413 / ADP1).